The following is a 389-amino-acid chain: Succinate--CoA ligase [ADP-forming] subunit beta (389 aa).

The region spanning 9–244 (KQLFEHYGLP…LTQNDAREAE (236 aa)) is the ATP-grasp domain. Residues K46, 53–55 (GRG), E99, C102, and E107 each bind ATP. Mg(2+) is bound by residues N199 and D213. Substrate contacts are provided by residues N264 and 321-323 (GIV).

Belongs to the succinate/malate CoA ligase beta subunit family. As to quaternary structure, heterotetramer of two alpha and two beta subunits. The cofactor is Mg(2+).

It carries out the reaction succinate + ATP + CoA = succinyl-CoA + ADP + phosphate. The catalysed reaction is GTP + succinate + CoA = succinyl-CoA + GDP + phosphate. It participates in carbohydrate metabolism; tricarboxylic acid cycle; succinate from succinyl-CoA (ligase route): step 1/1. Its function is as follows. Succinyl-CoA synthetase functions in the citric acid cycle (TCA), coupling the hydrolysis of succinyl-CoA to the synthesis of either ATP or GTP and thus represents the only step of substrate-level phosphorylation in the TCA. The beta subunit provides nucleotide specificity of the enzyme and binds the substrate succinate, while the binding sites for coenzyme A and phosphate are found in the alpha subunit. The chain is Succinate--CoA ligase [ADP-forming] subunit beta from Haemophilus influenzae (strain ATCC 51907 / DSM 11121 / KW20 / Rd).